A 655-amino-acid polypeptide reads, in one-letter code: Acetyl-coenzyme A synthetase (655 aa).

CoA is bound by residues 196 to 199 and threonine 316; that span reads RGGR. ATP-binding positions include 392 to 394, 416 to 421, aspartate 508, and arginine 523; these read GEP and DTWWQT. Serine 531 contributes to the CoA binding site. Arginine 534 serves as a coordination point for ATP. Mg(2+)-binding residues include valine 545, histidine 547, and valine 550. At lysine 620 the chain carries N6-acetyllysine.

The protein belongs to the ATP-dependent AMP-binding enzyme family. Mg(2+) is required as a cofactor. Acetylated. Deacetylation by the SIR2-homolog deacetylase activates the enzyme.

It carries out the reaction acetate + ATP + CoA = acetyl-CoA + AMP + diphosphate. Its function is as follows. Catalyzes the conversion of acetate into acetyl-CoA (AcCoA), an essential intermediate at the junction of anabolic and catabolic pathways. AcsA undergoes a two-step reaction. In the first half reaction, AcsA combines acetate with ATP to form acetyl-adenylate (AcAMP) intermediate. In the second half reaction, it can then transfer the acetyl group from AcAMP to the sulfhydryl group of CoA, forming the product AcCoA. This Nitrosomonas europaea (strain ATCC 19718 / CIP 103999 / KCTC 2705 / NBRC 14298) protein is Acetyl-coenzyme A synthetase.